Here is a 107-residue protein sequence, read N- to C-terminus: NADH dehydrogenase [ubiquinone] 1 beta subcomplex subunit 10-A (107 aa).

Positions 1-23 are disordered; the sequence is MGRKKGLPEFEESAPDGFDPENP.

It belongs to the complex I NDUFB10 subunit family. In terms of assembly, complex I is composed of at least 49 different subunits.

It is found in the mitochondrion inner membrane. Accessory subunit of the mitochondrial membrane respiratory chain NADH dehydrogenase (Complex I), that is believed not to be involved in catalysis. Complex I functions in the transfer of electrons from NADH to the respiratory chain. The immediate electron acceptor for the enzyme is believed to be ubiquinone. This chain is NADH dehydrogenase [ubiquinone] 1 beta subcomplex subunit 10-A, found in Arabidopsis thaliana (Mouse-ear cress).